Reading from the N-terminus, the 633-residue chain is Chaperone protein dnaK2 (633 aa).

At T197 the chain carries Phosphothreonine; by autocatalysis. A disordered region spans residues 600-633 (SNAASQAADGTSSESNNSTEGNDDVIDAEFTESK). The segment covering 608–619 (DGTSSESNNSTE) has biased composition (low complexity). A compositionally biased stretch (acidic residues) spans 620–633 (GNDDVIDAEFTESK).

This sequence belongs to the heat shock protein 70 family.

Functionally, acts as a chaperone. In Prochlorococcus marinus (strain SARG / CCMP1375 / SS120), this protein is Chaperone protein dnaK2 (dnaK2).